We begin with the raw amino-acid sequence, 548 residues long: ATP synthase subunit alpha (548 aa).

172-179 contacts ATP; that stretch reads GDRKTGKT. Residues 526–548 are disordered; the sequence is AEAMDEADVEKESVKVRKPAPKK.

This sequence belongs to the ATPase alpha/beta chains family. As to quaternary structure, F-type ATPases have 2 components, CF(1) - the catalytic core - and CF(0) - the membrane proton channel. CF(1) has five subunits: alpha(3), beta(3), gamma(1), delta(1), epsilon(1). CF(0) has three main subunits: a(1), b(2) and c(9-12). The alpha and beta chains form an alternating ring which encloses part of the gamma chain. CF(1) is attached to CF(0) by a central stalk formed by the gamma and epsilon chains, while a peripheral stalk is formed by the delta and b chains.

The protein resides in the cell membrane. The enzyme catalyses ATP + H2O + 4 H(+)(in) = ADP + phosphate + 5 H(+)(out). Functionally, produces ATP from ADP in the presence of a proton gradient across the membrane. The alpha chain is a regulatory subunit. The protein is ATP synthase subunit alpha of Mycolicibacterium gilvum (strain PYR-GCK) (Mycobacterium gilvum (strain PYR-GCK)).